The primary structure comprises 122 residues: Succinate dehydrogenase assembly factor 2, mitochondrial (122 aa).

This sequence belongs to the SDHAF2 family. Interacts with the flavoprotein subunit within the SDH catalytic dimer.

It localises to the mitochondrion matrix. Functionally, plays an essential role in the assembly of succinate dehydrogenase (SDH), an enzyme complex (also referred to as respiratory complex II) that is a component of both the tricarboxylic acid (TCA) cycle and the mitochondrial electron transport chain, and which couples the oxidation of succinate to fumarate with the reduction of ubiquinone (coenzyme Q) to ubiquinol. Required for flavinylation (covalent attachment of FAD) of the flavoprotein subunit of the SDH catalytic dimer. This is Succinate dehydrogenase assembly factor 2, mitochondrial from Caenorhabditis briggsae.